Consider the following 918-residue polypeptide: Sarcosine dehydrogenase, mitochondrial (918 aa).

The span at 1–13 shows a compositional bias: low complexity; the sequence is MASLSRALRVAAA. The transit peptide at 1–22 directs the protein to the mitochondrion; sequence MASLSRALRVAAAHPRQSPTRG. The segment at 1–40 is disordered; sequence MASLSRALRVAAAHPRQSPTRGMGPCNLSSAAGPTAEKSV. At lysine 38 the chain carries N6-succinyllysine. The residue at position 108 (histidine 108) is a Tele-8alpha-FAD histidine. Lysine 173 is subject to N6-acetyllysine; alternate. At lysine 173 the chain carries N6-succinyllysine; alternate. 2 positions are modified to N6-succinyllysine: lysine 377 and lysine 391. Lysine 559 and lysine 775 each carry N6-acetyllysine. Tyrosine 777 is subject to Phosphotyrosine. Lysine 802, lysine 884, and lysine 904 each carry N6-acetyllysine; alternate. N6-succinyllysine; alternate occurs at positions 802, 884, and 904.

This sequence belongs to the GcvT family. FAD is required as a cofactor. Expressed in pancreas, liver and kidney.

It localises to the mitochondrion matrix. The enzyme catalyses (6S)-5,6,7,8-tetrahydrofolyl-(gamma-L-Glu)(n) + sarcosine + oxidized [electron-transfer flavoprotein] + H(+) = (6R)-5,10-methylenetetrahydrofolyl-(gamma-L-Glu)(n) + reduced [electron-transfer flavoprotein] + glycine. It participates in amine and polyamine degradation; sarcosine degradation; formaldehyde and glycine from sarcosine: step 1/1. Catalyzes the last step of the oxidative degradation of choline to glycine. Converts sarcosine into glycine. The sequence is that of Sarcosine dehydrogenase, mitochondrial from Homo sapiens (Human).